Here is a 177-residue protein sequence, read N- to C-terminus: ATP synthase subunit b (177 aa).

Residues F35–P55 traverse the membrane as a helical segment.

It belongs to the ATPase B chain family. As to quaternary structure, F-type ATPases have 2 components, F(1) - the catalytic core - and F(0) - the membrane proton channel. F(1) has five subunits: alpha(3), beta(3), gamma(1), delta(1), epsilon(1). F(0) has three main subunits: a(1), b(2) and c(10-14). The alpha and beta chains form an alternating ring which encloses part of the gamma chain. F(1) is attached to F(0) by a central stalk formed by the gamma and epsilon chains, while a peripheral stalk is formed by the delta and b chains.

The protein localises to the cell membrane. Functionally, f(1)F(0) ATP synthase produces ATP from ADP in the presence of a proton or sodium gradient. F-type ATPases consist of two structural domains, F(1) containing the extramembraneous catalytic core and F(0) containing the membrane proton channel, linked together by a central stalk and a peripheral stalk. During catalysis, ATP synthesis in the catalytic domain of F(1) is coupled via a rotary mechanism of the central stalk subunits to proton translocation. In terms of biological role, component of the F(0) channel, it forms part of the peripheral stalk, linking F(1) to F(0). The polypeptide is ATP synthase subunit b (Mycobacteroides abscessus (strain ATCC 19977 / DSM 44196 / CCUG 20993 / CIP 104536 / JCM 13569 / NCTC 13031 / TMC 1543 / L948) (Mycobacterium abscessus)).